The primary structure comprises 365 residues: Glucose 1-dehydrogenase 1 (365 aa).

D38 provides a ligand contact to Zn(2+). Residue T40 participates in substrate binding. H63 and E64 together coordinate Zn(2+). E115 and E151 together coordinate substrate. Residue E151 participates in Zn(2+) binding. NADP(+)-binding positions include 182–185 (NGSL), 207–208 (RR), 272–274 (LGV), and 301–303 (SVN). Position 303 (N303) interacts with substrate.

It belongs to the zinc-containing alcohol dehydrogenase family. Glucose 1-dehydrogenase subfamily. Zn(2+) is required as a cofactor.

It catalyses the reaction D-glucose + NAD(+) = D-glucono-1,5-lactone + NADH + H(+). The enzyme catalyses D-glucose + NADP(+) = D-glucono-1,5-lactone + NADPH + H(+). In terms of biological role, catalyzes the NAD(P)(+)-dependent oxidation of D-glucose to D-gluconate via gluconolactone. Can utilize both NAD(+) and NADP(+) as electron acceptor. Is involved in the degradation of glucose through a modified Entner-Doudoroff pathway. This Haloterrigena turkmenica (strain ATCC 51198 / DSM 5511 / JCM 9101 / NCIMB 13204 / VKM B-1734 / 4k) (Halococcus turkmenicus) protein is Glucose 1-dehydrogenase 1.